The following is a 156-amino-acid chain: MNPQRRRRLWLVLALVLAGGLATTLVAMALQRNVAYLYTPSEVLRGDAGAHSRFRLGGMVEKGSFKRASGSLEAQFRVTDGDAQLSVSYDRILPDLFREGQAVVATGRMQHGIFVAEDVLAKHDETYMPKEVADKMGSAHRKHDVPAAAGQVGERQ.

Residues 1 to 8 are Cytoplasmic-facing; the sequence is MNPQRRRR. The chain crosses the membrane as a helical; Signal-anchor for type II membrane protein span at residues 9 to 29; it reads LWLVLALVLAGGLATTLVAMA. At 30-156 the chain is on the periplasmic side; it reads LQRNVAYLYT…AAAGQVGERQ (127 aa). Positions 123 and 127 each coordinate heme. The disordered stretch occupies residues 136–156; that stretch reads MGSAHRKHDVPAAAGQVGERQ.

Belongs to the CcmE/CycJ family.

The protein localises to the cell inner membrane. Heme chaperone required for the biogenesis of c-type cytochromes. Transiently binds heme delivered by CcmC and transfers the heme to apo-cytochromes in a process facilitated by CcmF and CcmH. The chain is Cytochrome c-type biogenesis protein CcmE 2 from Xanthomonas axonopodis pv. citri (strain 306).